The following is a 236-amino-acid chain: Sugar fermentation stimulation protein homolog (236 aa).

This sequence belongs to the SfsA family.

The sequence is that of Sugar fermentation stimulation protein homolog from Pseudomonas fluorescens (strain SBW25).